The sequence spans 295 residues: ATP-dependent (S)-NAD(P)H-hydrate dehydratase (295 aa).

The region spanning 9 to 289 (LLERARNLVP…DQIHQVFDDL (281 aa)) is the YjeF C-terminal domain. (6S)-NADPHX-binding positions include Gly-109 and 162–168 (NAIEFCR). ATP is bound by residues 193-197 (KGLND) and 214-223 (GSGRRCGGQG). Asp-224 is a (6S)-NADPHX binding site.

This sequence belongs to the NnrD/CARKD family. Mg(2+) serves as cofactor.

The catalysed reaction is (6S)-NADHX + ATP = ADP + phosphate + NADH + H(+). The enzyme catalyses (6S)-NADPHX + ATP = ADP + phosphate + NADPH + H(+). Catalyzes the dehydration of the S-form of NAD(P)HX at the expense of ATP, which is converted to ADP. Together with NAD(P)HX epimerase, which catalyzes the epimerization of the S- and R-forms, the enzyme allows the repair of both epimers of NAD(P)HX, a damaged form of NAD(P)H that is a result of enzymatic or heat-dependent hydration. This Anopheles darlingi (Mosquito) protein is ATP-dependent (S)-NAD(P)H-hydrate dehydratase.